Here is a 260-residue protein sequence, read N- to C-terminus: Adenosylcobinamide-GDP ribazoletransferase (260 aa).

The next 6 helical transmembrane spans lie at 40 to 60 (AFPF…LLLL), 64 to 84 (ADPL…TGAL), 117 to 137 (YGAI…AVIA), 142 to 162 (PLTA…AIAW), 188 to 208 (QFAL…AFGL), and 209 to 229 (RPLV…TAFI).

Belongs to the CobS family. Requires Mg(2+) as cofactor.

The protein resides in the cell inner membrane. It carries out the reaction alpha-ribazole + adenosylcob(III)inamide-GDP = adenosylcob(III)alamin + GMP + H(+). It catalyses the reaction alpha-ribazole 5'-phosphate + adenosylcob(III)inamide-GDP = adenosylcob(III)alamin 5'-phosphate + GMP + H(+). It participates in cofactor biosynthesis; adenosylcobalamin biosynthesis; adenosylcobalamin from cob(II)yrinate a,c-diamide: step 7/7. In terms of biological role, joins adenosylcobinamide-GDP and alpha-ribazole to generate adenosylcobalamin (Ado-cobalamin). Also synthesizes adenosylcobalamin 5'-phosphate from adenosylcobinamide-GDP and alpha-ribazole 5'-phosphate. In Rhizobium johnstonii (strain DSM 114642 / LMG 32736 / 3841) (Rhizobium leguminosarum bv. viciae), this protein is Adenosylcobinamide-GDP ribazoletransferase.